The sequence spans 88 residues: HssA/B-like protein 12 (88 aa).

Belongs to the hssA/B family.

This is HssA/B-like protein 12 (hssl12) from Dictyostelium discoideum (Social amoeba).